The sequence spans 560 residues: Membrane protein insertase YidC (560 aa).

6 helical membrane-spanning segments follow: residues 5 to 25, 334 to 354, 357 to 377, 431 to 451, 476 to 496, and 522 to 542; these read IINL…WQYF, AIDF…MNFF, YVGN…LLMF, LPIL…YVTI, LFGL…WPIL, and FMPL…LIYW.

Belongs to the OXA1/ALB3/YidC family. Type 1 subfamily. Interacts with the Sec translocase complex via SecD. Specifically interacts with transmembrane segments of nascent integral membrane proteins during membrane integration.

Its subcellular location is the cell inner membrane. Functionally, required for the insertion and/or proper folding and/or complex formation of integral membrane proteins into the membrane. Involved in integration of membrane proteins that insert both dependently and independently of the Sec translocase complex, as well as at least some lipoproteins. Aids folding of multispanning membrane proteins. This chain is Membrane protein insertase YidC, found in Rickettsia rickettsii (strain Iowa).